Reading from the N-terminus, the 463-residue chain is Chaperone SurA (463 aa).

The signal sequence occupies residues 1–25; sequence MTKPFSVVLASLLAITSTVSPLASA. PpiC domains lie at 174 to 276 and 289 to 388; these read GSQY…KLVE and VTEY…QRVG. Disordered stretches follow at residues 328–348 and 432–463; these read QATAKESSEDTNSRGQGGDLG and RTGDRADDNATAAPAKSADPAAPSPPPAKPTR. The span at 440 to 452 shows a compositional bias: low complexity; that stretch reads NATAAPAKSADPA. Pro residues predominate over residues 453-463; the sequence is APSPPPAKPTR.

It is found in the periplasm. The enzyme catalyses [protein]-peptidylproline (omega=180) = [protein]-peptidylproline (omega=0). Its function is as follows. Chaperone involved in the correct folding and assembly of outer membrane proteins. Recognizes specific patterns of aromatic residues and the orientation of their side chains, which are found more frequently in integral outer membrane proteins. May act in both early periplasmic and late outer membrane-associated steps of protein maturation. The chain is Chaperone SurA from Xanthomonas euvesicatoria pv. vesicatoria (strain 85-10) (Xanthomonas campestris pv. vesicatoria).